The following is a 356-amino-acid chain: Ferrochelatase (356 aa).

Positions 214 and 295 each coordinate Fe cation.

It belongs to the ferrochelatase family.

It localises to the cytoplasm. It catalyses the reaction heme b + 2 H(+) = protoporphyrin IX + Fe(2+). It functions in the pathway porphyrin-containing compound metabolism; protoheme biosynthesis; protoheme from protoporphyrin-IX: step 1/1. In terms of biological role, catalyzes the ferrous insertion into protoporphyrin IX. This Paraburkholderia phytofirmans (strain DSM 17436 / LMG 22146 / PsJN) (Burkholderia phytofirmans) protein is Ferrochelatase.